The primary structure comprises 1527 residues: Lysophospholipase nte1 (1527 aa).

Residues 1 to 73 (MADSGASVPS…SPPTPTTMVG (73 aa)) are Cytoplasmic-facing. Residues 74–94 (WIGWVFSLVFQTIPSVLYWVI) traverse the membrane as a helical segment. The Lumenal segment spans residues 95-116 (TFSTITLPTWLFTLFSMSLTFT). Residues 117 to 137 (MNFTTLLLIVLGLVSTVSWFI) traverse the membrane as a helical segment. Residues 138-1527 (RYRFLNMYSR…RTLAPRRASI (1390 aa)) are Cytoplasmic-facing. Over residues 299–310 (GSSSSMSSVQPS) the composition is skewed to low complexity. Disordered stretches follow at residues 299–387 (GSSS…RRKS), 567–596 (DQFATTPRLHSPLTEKERSPLRRSSLQRKD), and 765–785 (ATSRGATAAAPINESKRKKPS). Residues 364–377 (RASSYHPNGQSTAS) are compositionally biased toward polar residues. A nucleoside 3',5'-cyclic phosphate contacts are provided by residues 682 to 809 (GGTS…SYRS) and 846 to 966 (RLTG…IAQR). The 165-residue stretch at 1224-1388 (LVLGGGGARG…IDNLTVAHMK (165 aa)) folds into the PNPLA domain. The GXGXXG motif lies at 1228–1233 (GGGARG). The GXSXG motif lies at 1255–1259 (GTSIG). Residue Ser-1257 is the Nucleophile of the active site. Asp-1375 functions as the Proton acceptor in the catalytic mechanism. The DGA/G signature appears at 1375-1377 (DGG). The segment at 1504 to 1527 (LPLPEENEEKKKLQRTLAPRRASI) is disordered.

The protein belongs to the NTE family.

The protein resides in the endoplasmic reticulum membrane. The catalysed reaction is a 1-acyl-sn-glycero-3-phosphocholine + H2O = sn-glycerol 3-phosphocholine + a fatty acid + H(+). Its activity is regulated as follows. Inhibited by organophosphorus esters. Its function is as follows. Intracellular phospholipase B that catalyzes the double deacylation of phosphatidylcholine (PC) to glycerophosphocholine (GroPCho). Plays an important role in membrane lipid homeostasis. Responsible for the rapid PC turnover in response to inositol, elevated temperatures, or when choline is present in the growth medium. The chain is Lysophospholipase nte1 (nte1) from Emericella nidulans (strain FGSC A4 / ATCC 38163 / CBS 112.46 / NRRL 194 / M139) (Aspergillus nidulans).